The following is a 445-amino-acid chain: Protein phosphatase 2C 53 (445 aa).

Positions Leu124–Leu435 constitute a PPM-type phosphatase domain. Residues Asp180, Gly181, Asp362, and Asp426 each contribute to the Mn(2+) site.

This sequence belongs to the PP2C family. As to quaternary structure, interacts with PYL10, SAPK8 and SAPK10. Binding to PYL10 is dependent on the presence of abscisic acid (ABA). Interacts with PYL3, PYL5, PYL9 and PYL10. Binding to PYL9 and PYL10 is dependent on the presence of ABA. The cofactor is Mg(2+). Mn(2+) is required as a cofactor. As to expression, expressed in leaf blades, leaf sheaths and lamina joints. Expressed at low levels in roots, stems, flowers and panicles.

It is found in the cytoplasm. The protein resides in the cytosol. It localises to the nucleus. It carries out the reaction O-phospho-L-seryl-[protein] + H2O = L-seryl-[protein] + phosphate. The catalysed reaction is O-phospho-L-threonyl-[protein] + H2O = L-threonyl-[protein] + phosphate. Repressed by abscisic acid-bound PYL1. Its function is as follows. Protein phosphatase that acts as a negative regulator of abscisic acid (ABA) signaling. Involved in the regulation of root architecture development and drought resistance. Can dephosphorylate SAPK8 and SAPK10 in vitro. Together with PYL10, SAPK8 and SAPK10, may form an ABA signaling module involved in stress response. This is Protein phosphatase 2C 53 from Oryza sativa subsp. japonica (Rice).